A 310-amino-acid chain; its full sequence is Aspartate carbamoyltransferase catalytic subunit (310 aa).

The carbamoyl phosphate site is built by Arg58 and Thr59. Lys86 provides a ligand contact to L-aspartate. Carbamoyl phosphate contacts are provided by Arg108, His136, and Gln139. The L-aspartate site is built by Arg169 and Arg224. Carbamoyl phosphate is bound by residues Gly265 and Pro266.

It belongs to the aspartate/ornithine carbamoyltransferase superfamily. ATCase family. In terms of assembly, heterododecamer (2C3:3R2) of six catalytic PyrB chains organized as two trimers (C3), and six regulatory PyrI chains organized as three dimers (R2).

The enzyme catalyses carbamoyl phosphate + L-aspartate = N-carbamoyl-L-aspartate + phosphate + H(+). The protein operates within pyrimidine metabolism; UMP biosynthesis via de novo pathway; (S)-dihydroorotate from bicarbonate: step 2/3. Functionally, catalyzes the condensation of carbamoyl phosphate and aspartate to form carbamoyl aspartate and inorganic phosphate, the committed step in the de novo pyrimidine nucleotide biosynthesis pathway. This Trichlorobacter lovleyi (strain ATCC BAA-1151 / DSM 17278 / SZ) (Geobacter lovleyi) protein is Aspartate carbamoyltransferase catalytic subunit.